The primary structure comprises 283 residues: 4-diphosphocytidyl-2-C-methyl-D-erythritol kinase (283 aa).

Lysine 10 is an active-site residue. Proline 99–serine 109 contributes to the ATP binding site. Aspartate 141 is a catalytic residue.

The protein belongs to the GHMP kinase family. IspE subfamily. As to quaternary structure, homodimer.

It catalyses the reaction 4-CDP-2-C-methyl-D-erythritol + ATP = 4-CDP-2-C-methyl-D-erythritol 2-phosphate + ADP + H(+). It participates in isoprenoid biosynthesis; isopentenyl diphosphate biosynthesis via DXP pathway; isopentenyl diphosphate from 1-deoxy-D-xylulose 5-phosphate: step 3/6. In terms of biological role, catalyzes the phosphorylation of the position 2 hydroxy group of 4-diphosphocytidyl-2C-methyl-D-erythritol. This is 4-diphosphocytidyl-2-C-methyl-D-erythritol kinase from Shigella boydii serotype 18 (strain CDC 3083-94 / BS512).